The following is a 460-amino-acid chain: Bifunctional protein GlmU (460 aa).

The pyrophosphorylase stretch occupies residues 1 to 229 (MTNYAIILAA…FNESLGVNDR (229 aa)). UDP-N-acetyl-alpha-D-glucosamine-binding positions include 8 to 11 (LAAG), Lys-22, Gln-72, and 77 to 78 (GT). Asp-102 contributes to the Mg(2+) binding site. UDP-N-acetyl-alpha-D-glucosamine contacts are provided by Gly-139, Glu-154, Asn-169, and Asn-227. Asn-227 contributes to the Mg(2+) binding site. Residues 230-250 (VALATAETVMRQRITQKHMVN) are linker. An N-acetyltransferase region spans residues 251–460 (GVTFQNPETV…RLAHHPSRSK (210 aa)). Residues Arg-332 and Lys-350 each coordinate UDP-N-acetyl-alpha-D-glucosamine. His-362 (proton acceptor) is an active-site residue. Tyr-365 and Asn-376 together coordinate UDP-N-acetyl-alpha-D-glucosamine. Acetyl-CoA is bound by residues Ala-379, 385–386 (NY), Ser-404, Ala-422, and Arg-439.

The protein in the N-terminal section; belongs to the N-acetylglucosamine-1-phosphate uridyltransferase family. This sequence in the C-terminal section; belongs to the transferase hexapeptide repeat family. Homotrimer. Mg(2+) serves as cofactor.

Its subcellular location is the cytoplasm. The enzyme catalyses alpha-D-glucosamine 1-phosphate + acetyl-CoA = N-acetyl-alpha-D-glucosamine 1-phosphate + CoA + H(+). It catalyses the reaction N-acetyl-alpha-D-glucosamine 1-phosphate + UTP + H(+) = UDP-N-acetyl-alpha-D-glucosamine + diphosphate. Its pathway is nucleotide-sugar biosynthesis; UDP-N-acetyl-alpha-D-glucosamine biosynthesis; N-acetyl-alpha-D-glucosamine 1-phosphate from alpha-D-glucosamine 6-phosphate (route II): step 2/2. It participates in nucleotide-sugar biosynthesis; UDP-N-acetyl-alpha-D-glucosamine biosynthesis; UDP-N-acetyl-alpha-D-glucosamine from N-acetyl-alpha-D-glucosamine 1-phosphate: step 1/1. It functions in the pathway bacterial outer membrane biogenesis; LPS lipid A biosynthesis. Catalyzes the last two sequential reactions in the de novo biosynthetic pathway for UDP-N-acetylglucosamine (UDP-GlcNAc). The C-terminal domain catalyzes the transfer of acetyl group from acetyl coenzyme A to glucosamine-1-phosphate (GlcN-1-P) to produce N-acetylglucosamine-1-phosphate (GlcNAc-1-P), which is converted into UDP-GlcNAc by the transfer of uridine 5-monophosphate (from uridine 5-triphosphate), a reaction catalyzed by the N-terminal domain. The chain is Bifunctional protein GlmU from Streptococcus pyogenes serotype M12 (strain MGAS9429).